The chain runs to 235 residues: Glycerol-3-phosphate acyltransferase (235 aa).

6 consecutive transmembrane segments (helical) span residues 4 to 24 (LLAI…IMAG), 56 to 76 (SVTL…VAFF), 94 to 114 (LLAG…GFKG), 125 to 145 (LIGI…LTVW), 152 to 172 (VASI…KYVF), and 191 to 211 (FHDS…LAIL).

It belongs to the PlsY family. Probably interacts with PlsX.

It localises to the cell inner membrane. The catalysed reaction is an acyl phosphate + sn-glycerol 3-phosphate = a 1-acyl-sn-glycero-3-phosphate + phosphate. It participates in lipid metabolism; phospholipid metabolism. Catalyzes the transfer of an acyl group from acyl-phosphate (acyl-PO(4)) to glycerol-3-phosphate (G3P) to form lysophosphatidic acid (LPA). This enzyme utilizes acyl-phosphate as fatty acyl donor, but not acyl-CoA or acyl-ACP. The polypeptide is Glycerol-3-phosphate acyltransferase (Chlorobium luteolum (strain DSM 273 / BCRC 81028 / 2530) (Pelodictyon luteolum)).